Reading from the N-terminus, the 461-residue chain is Epidermin leader peptide-processing serine protease EpiP (461 aa).

The signal sequence occupies residues 1–23 (MNKFKFFIVFLILSLVFLQNEYA). Positions 121-459 (QWDMRKITNE…NGKLDVYKLL (339 aa)) constitute a Peptidase S8 domain. Active-site charge relay system residues include D149, H194, and S402.

It belongs to the peptidase S8 family.

Its pathway is antibiotic biosynthesis; epidermin biosynthesis. In terms of biological role, protease which cleaves the matured lantibiotic from the modified prepeptide. This chain is Epidermin leader peptide-processing serine protease EpiP (epiP), found in Staphylococcus epidermidis.